The following is a 433-amino-acid chain: Glutamate-1-semialdehyde 2,1-aminomutase (433 aa).

Lys269 carries the N6-(pyridoxal phosphate)lysine modification.

It belongs to the class-III pyridoxal-phosphate-dependent aminotransferase family. HemL subfamily. Homodimer. Pyridoxal 5'-phosphate serves as cofactor.

Its subcellular location is the cytoplasm. The enzyme catalyses (S)-4-amino-5-oxopentanoate = 5-aminolevulinate. Its pathway is porphyrin-containing compound metabolism; protoporphyrin-IX biosynthesis; 5-aminolevulinate from L-glutamyl-tRNA(Glu): step 2/2. The sequence is that of Glutamate-1-semialdehyde 2,1-aminomutase from Francisella philomiragia subsp. philomiragia (strain ATCC 25017 / CCUG 19701 / FSC 153 / O#319-036).